The sequence spans 297 residues: 4-hydroxy-tetrahydrodipicolinate synthase (297 aa).

Thr-47 serves as a coordination point for pyruvate. Tyr-136 (proton donor/acceptor) is an active-site residue. Lys-165 (schiff-base intermediate with substrate) is an active-site residue. Residue Ile-206 participates in pyruvate binding.

This sequence belongs to the DapA family. Homotetramer; dimer of dimers.

The protein localises to the cytoplasm. The enzyme catalyses L-aspartate 4-semialdehyde + pyruvate = (2S,4S)-4-hydroxy-2,3,4,5-tetrahydrodipicolinate + H2O + H(+). It functions in the pathway amino-acid biosynthesis; L-lysine biosynthesis via DAP pathway; (S)-tetrahydrodipicolinate from L-aspartate: step 3/4. Catalyzes the condensation of (S)-aspartate-beta-semialdehyde [(S)-ASA] and pyruvate to 4-hydroxy-tetrahydrodipicolinate (HTPA). The chain is 4-hydroxy-tetrahydrodipicolinate synthase from Campylobacter curvus (strain 525.92).